The primary structure comprises 479 residues: MLAETQLAPIAVIGDVMVDRYITGSVSRISPEAPVPVLVHGAERIVPGGAANVAANAAALGAPVLLVGLVGEDEAASQLADALATYPGISLAHMVVDAKRPTITKTRVMSGRQQIVRIDAEVTRACDAAEEAALIGAAEAAIAKAGVVVLSDYAKGVLSDAVIAAAMAAAKARNVPVIVDPKRRTFEAYRGATLVTPNRRELAEATGLPDETDADAARAAEAAGRQFGGDVLVTRAEKGMTLWRQDGRVLHVPAEAREVFDVSGAGDTALAALAVSLAGGQSLEASVGIANAAAALAVAKLGTAVVTRAELRAALERTAAQIAPPGALVSREDACAVVAAWKAQGLRVVFTNGCFDLVHPGHVSLLEQSAAQGDRLVVALNTDASVRRLKGPSRPLQDEQARARVMGAMRCVDLVVLFDEETPLETIKALLPDVLVKGADYAPHEVVGADVVTANGGELVLVDLVAGKSTSSLVAKART.

Positions 1 to 322 are ribokinase; the sequence is MLAETQLAPI…AALERTAAQI (322 aa). 198 to 201 contacts ATP; sequence NRRE. The active site involves aspartate 267. Positions 350 to 479 are cytidylyltransferase; sequence FTNGCFDLVH…TSSLVAKART (130 aa).

In the N-terminal section; belongs to the carbohydrate kinase PfkB family. This sequence in the C-terminal section; belongs to the cytidylyltransferase family. Homodimer.

The enzyme catalyses D-glycero-beta-D-manno-heptose 7-phosphate + ATP = D-glycero-beta-D-manno-heptose 1,7-bisphosphate + ADP + H(+). It carries out the reaction D-glycero-beta-D-manno-heptose 1-phosphate + ATP + H(+) = ADP-D-glycero-beta-D-manno-heptose + diphosphate. It functions in the pathway nucleotide-sugar biosynthesis; ADP-L-glycero-beta-D-manno-heptose biosynthesis; ADP-L-glycero-beta-D-manno-heptose from D-glycero-beta-D-manno-heptose 7-phosphate: step 1/4. It participates in nucleotide-sugar biosynthesis; ADP-L-glycero-beta-D-manno-heptose biosynthesis; ADP-L-glycero-beta-D-manno-heptose from D-glycero-beta-D-manno-heptose 7-phosphate: step 3/4. Its function is as follows. Catalyzes the phosphorylation of D-glycero-D-manno-heptose 7-phosphate at the C-1 position to selectively form D-glycero-beta-D-manno-heptose-1,7-bisphosphate. Functionally, catalyzes the ADP transfer from ATP to D-glycero-beta-D-manno-heptose 1-phosphate, yielding ADP-D-glycero-beta-D-manno-heptose. The sequence is that of Bifunctional protein HldE from Azorhizobium caulinodans (strain ATCC 43989 / DSM 5975 / JCM 20966 / LMG 6465 / NBRC 14845 / NCIMB 13405 / ORS 571).